Reading from the N-terminus, the 1019-residue chain is Collagen alpha-1(VI) chain (1019 aa).

Positions 1–19 (MGLHDSFLALLLLLGGAWA) are cleaved as a signal peptide. The 197-residue stretch at 37 to 233 (DLFFVLDTSE…LDVEETINNI (197 aa)) folds into the VWFA 1 domain. Residue Asn-212 is glycosylated (N-linked (GlcNAc...) asparagine). Positions 248 to 588 (FECHPPRGPP…GPPGPVGPPG (341 aa)) are disordered. The segment covering 253–262 (PRGPPGPPGD) has biased composition (pro residues). Composition is skewed to basic and acidic residues over residues 299-332 (KGDKGSRGEKGSRGAKGAKGEKGKRGIDGIDGMK) and 370-380 (GKGEPGEDGKP). The span at 427-436 (ERGPPGSPGD) shows a compositional bias: low complexity. The short motif at 476–478 (RGD) is the Cell attachment site element. Residue Asn-514 is glycosylated (N-linked (GlcNAc...) asparagine). The short motif at 529–531 (RGD) is the Cell attachment site element. An N-linked (GlcNAc...) asparagine glycan is attached at Asn-535. Positions 577–588 (RPGPPGPVGPPG) are enriched in pro residues. 2 VWFA domains span residues 613-800 (DLLF…LQNI) and 824-1012 (DIML…YQTV). 2 N-linked (GlcNAc...) asparagine glycosylation sites follow: Asn-799 and Asn-887.

It belongs to the type VI collagen family. As to quaternary structure, trimers composed of three different chains: alpha 1(VI), alpha 2(VI), and alpha 3(VI). Post-translationally, prolines at the third position of the tripeptide repeating unit (G-X-Y) are hydroxylated in some or all of the chains.

It is found in the secreted. The protein localises to the extracellular space. It localises to the extracellular matrix. Collagen VI acts as a cell-binding protein. This Gallus gallus (Chicken) protein is Collagen alpha-1(VI) chain (COL6A1).